The sequence spans 591 residues: Aspartate--tRNA(Asp/Asn) ligase (591 aa).

E174 contacts L-aspartate. Residues 198–201 (QLFK) form an aspartate region. R220 lines the L-aspartate pocket. ATP is bound by residues 220–222 (RDE) and Q229. H450 contributes to the L-aspartate binding site. E483 is a binding site for ATP. R490 contacts L-aspartate. 535–538 (GLDR) serves as a coordination point for ATP.

This sequence belongs to the class-II aminoacyl-tRNA synthetase family. Type 1 subfamily. Homodimer.

It is found in the cytoplasm. It catalyses the reaction tRNA(Asx) + L-aspartate + ATP = L-aspartyl-tRNA(Asx) + AMP + diphosphate. Aspartyl-tRNA synthetase with relaxed tRNA specificity since it is able to aspartylate not only its cognate tRNA(Asp) but also tRNA(Asn). Reaction proceeds in two steps: L-aspartate is first activated by ATP to form Asp-AMP and then transferred to the acceptor end of tRNA(Asp/Asn). The protein is Aspartate--tRNA(Asp/Asn) ligase of Pseudomonas fluorescens (strain Pf0-1).